The following is a 479-amino-acid chain: Glutamate receptor U1 (479 aa).

Positions 1 to 17 (MEKSLLFLFAVTLLSVG) are cleaved as a signal peptide. At 18–163 (CTDAGESKGS…LFGFLTPFSK (146 aa)) the chain is on the extracellular side. The N-linked (GlcNAc...) asparagine glycan is linked to asparagine 79. The chain crosses the membrane as a helical span at residues 164–184 (ETWIGILVAYMVTSLCLFLVG). Residues 185–229 (RLSPCEWTELSTEQNNFTFLNSLWFGAGAFTLQGAEPHPKSVSAR) lie on the Cytoplasmic side of the membrane. Residues 230-250 (IIAVIWWIFSIVLVAAYIASF) traverse the membrane as a helical segment. The Extracellular segment spans residues 251–414 (AAFLNSDSVQ…AGWNPVQPHT (164 aa)). Residue asparagine 282 is glycosylated (N-linked (GlcNAc...) asparagine). Residues 415–435 (LGGIFLILGIGLALGVIAALI) form a helical membrane-spanning segment. Topologically, residues 436–479 (ELVLKARNNADQQKKSCCSAFSEEMGERLGTNKENQGAVDSVKS) are cytoplasmic.

It belongs to the glutamate-gated ion channel (TC 1.A.10.1) family. As to quaternary structure, homomeric.

It is found in the cell membrane. The protein resides in the postsynaptic cell membrane. Receptor for glutamate. L-glutamate acts as an excitatory neurotransmitter at many synapses in the central nervous system. The postsynaptic actions of Glu are mediated by a variety of receptors that are named according to their selective agonists. This receptor binds domoate &gt; kainate &gt; AMPA &gt; NBQX &gt; glutamate. The protein is Glutamate receptor U1 (kbp) of Xenopus laevis (African clawed frog).